A 192-amino-acid chain; its full sequence is Ion-translocating oxidoreductase complex subunit A (192 aa).

Transmembrane regions (helical) follow at residues 5 to 25, 39 to 59, 65 to 85, 102 to 122, 134 to 154, and 171 to 191; these read LLLLISTVLVNNFVLVKFLGL, IGMSMATTFVLTLASILSYLV, LPFDLSYLRTMSFILVIAVVV, ALGIYLPLITTNCAVLGVALL, AIYGFGAAVGFSLVLILFSAM, and AIAMITAGLMSLAFMGFTGLV.

Belongs to the NqrDE/RnfAE family. As to quaternary structure, the complex is composed of six subunits: RnfA, RnfB, RnfC, RnfD, RnfE and RnfG.

It localises to the cell inner membrane. Functionally, part of a membrane-bound complex that couples electron transfer with translocation of ions across the membrane. The polypeptide is Ion-translocating oxidoreductase complex subunit A (Shewanella putrefaciens (strain CN-32 / ATCC BAA-453)).